We begin with the raw amino-acid sequence, 212 residues long: Nucleoside triphosphate pyrophosphatase (212 aa).

D79 serves as the catalytic Proton acceptor.

The protein belongs to the Maf family. The cofactor is a divalent metal cation.

It localises to the cytoplasm. The enzyme catalyses a ribonucleoside 5'-triphosphate + H2O = a ribonucleoside 5'-phosphate + diphosphate + H(+). The catalysed reaction is a 2'-deoxyribonucleoside 5'-triphosphate + H2O = a 2'-deoxyribonucleoside 5'-phosphate + diphosphate + H(+). Its function is as follows. Nucleoside triphosphate pyrophosphatase. May have a dual role in cell division arrest and in preventing the incorporation of modified nucleotides into cellular nucleic acids. In Nocardia farcinica (strain IFM 10152), this protein is Nucleoside triphosphate pyrophosphatase.